Consider the following 268-residue polypeptide: Methionine aminopeptidase (268 aa).

H79 contributes to the substrate binding site. D97, D108, and H172 together coordinate a divalent metal cation. Position 179 (H179) interacts with substrate. Positions 205 and 236 each coordinate a divalent metal cation.

This sequence belongs to the peptidase M24A family. Methionine aminopeptidase type 1 subfamily. In terms of assembly, monomer. Requires Co(2+) as cofactor. Zn(2+) is required as a cofactor. Mn(2+) serves as cofactor. The cofactor is Fe(2+).

The enzyme catalyses Release of N-terminal amino acids, preferentially methionine, from peptides and arylamides.. Functionally, removes the N-terminal methionine from nascent proteins. The N-terminal methionine is often cleaved when the second residue in the primary sequence is small and uncharged (Met-Ala-, Cys, Gly, Pro, Ser, Thr, or Val). Requires deformylation of the N(alpha)-formylated initiator methionine before it can be hydrolyzed. The protein is Methionine aminopeptidase of Haemophilus influenzae (strain ATCC 51907 / DSM 11121 / KW20 / Rd).